We begin with the raw amino-acid sequence, 461 residues long: UDP-N-acetylmuramoylalanine--D-glutamate ligase (461 aa).

123–129 lines the ATP pocket; it reads GTNGKTT.

This sequence belongs to the MurCDEF family.

The protein resides in the cytoplasm. It catalyses the reaction UDP-N-acetyl-alpha-D-muramoyl-L-alanine + D-glutamate + ATP = UDP-N-acetyl-alpha-D-muramoyl-L-alanyl-D-glutamate + ADP + phosphate + H(+). The protein operates within cell wall biogenesis; peptidoglycan biosynthesis. Functionally, cell wall formation. Catalyzes the addition of glutamate to the nucleotide precursor UDP-N-acetylmuramoyl-L-alanine (UMA). The chain is UDP-N-acetylmuramoylalanine--D-glutamate ligase from Natranaerobius thermophilus (strain ATCC BAA-1301 / DSM 18059 / JW/NM-WN-LF).